We begin with the raw amino-acid sequence, 321 residues long: Ribosomal RNA small subunit methyltransferase H (321 aa).

Residues 40–42, Asp60, Phe84, Asp106, and Gln113 each bind S-adenosyl-L-methionine; that span reads GGH.

The protein belongs to the methyltransferase superfamily. RsmH family.

It is found in the cytoplasm. The catalysed reaction is cytidine(1402) in 16S rRNA + S-adenosyl-L-methionine = N(4)-methylcytidine(1402) in 16S rRNA + S-adenosyl-L-homocysteine + H(+). Its function is as follows. Specifically methylates the N4 position of cytidine in position 1402 (C1402) of 16S rRNA. This is Ribosomal RNA small subunit methyltransferase H from Histophilus somni (strain 2336) (Haemophilus somnus).